Consider the following 90-residue polypeptide: Essential MCU regulator, mitochondrial (90 aa).

The chain crosses the membrane as a helical span at residues 49-68 (GVLKLIFVSASSLYIGGLIA).

Belongs to the SMDT1/EMRE family.

Its subcellular location is the mitochondrion inner membrane. Its function is as follows. Essential regulatory subunit of the mitochondrial calcium uniporter (mcu-1) channel, a protein that mediates calcium uptake into mitochondria. The polypeptide is Essential MCU regulator, mitochondrial (Caenorhabditis elegans).